We begin with the raw amino-acid sequence, 109 residues long: uncharacterized protein (109 aa).

This sequence belongs to the archaeal ATPase family.

This is an uncharacterized protein from Methanocaldococcus jannaschii (strain ATCC 43067 / DSM 2661 / JAL-1 / JCM 10045 / NBRC 100440) (Methanococcus jannaschii).